The chain runs to 69 residues: Omega-oxotoxin-Ol1a (69 aa).

Residues 1–68 enclose the Oxytoxin-type inhibitor cystine knot (ICK) domain; it reads DWECLPLHSS…GKINTCDKYK (68 aa). Intrachain disulfides connect C4–C18, C11–C23, C15–C64, C17–C52, and C25–C50. An Asparagine amide modification is found at N69.

It belongs to the spiderine family. Spiderine subfamily. As to expression, expressed by the venom gland.

The protein localises to the secreted. Functionally, weak blocker of vertebrate P/Q-, N- and L-type voltage-gated calcium channels (Cav1 and Cav2). Is both paralytic and lethal when injected into lepidopteran larvae. Is not toxic to mice. The polypeptide is Omega-oxotoxin-Ol1a (Oxyopes lineatus (Lynx spider)).